A 925-amino-acid polypeptide reads, in one-letter code: Neuronal PAS domain-containing protein 3 (925 aa).

The bHLH domain occupies 58 to 111 (LRKEKSRDAARSRRGKENFEFYELAKLLPLPAAITSQLDKASIIRLTISYLKMR). Residues 60-71 (KEKSRDAARSRR) are DNA-binding. Disordered stretches follow at residues 119–138 (PPWN…KGAQ) and 219–257 (LPPG…SPSL). A PAS 1 domain is found at 152–222 (EAHLGSHILQ…EQLGMKLPPG (71 aa)). A compositionally biased stretch (low complexity) spans 234 to 256 (AASSASSSSQSETPEPVETTSPS). Positions 324-394 (PPPTINEVRI…HSHLDLLNKG (71 aa)) constitute a PAS 2 domain. Residues 398 to 441 (TKYYRWMQKNGGYIWIQSSATIAINAKNANEKNIIWVNYLLSNP) enclose the PAC domain. 3 disordered regions span residues 457-555 (PEKA…FGAL), 576-645 (PCES…SSPH), and 664-774 (NESS…GASN). Basic and acidic residues-rich tracts occupy residues 484-493 (ENSKSDEKGN) and 529-549 (DSRD…KAAE). The segment covering 601–622 (KHQKRKRRRKRQKGGSASRRRL) has biased composition (basic residues). The segment covering 680-690 (NESPYSMTKPP) has biased composition (polar residues). 2 stretches are compositionally biased toward gly residues: residues 700–710 (GQGGSIGGGGA) and 760–771 (GGGAGSGGGGPG).

Efficient DNA binding requires dimerization with another bHLH protein. Interacts with ARNT; forms a heterodimer that binds core DNA sequence 5'-[AG]CGTG-3' within the hypoxia response element (HRE) of target gene promoters. In terms of tissue distribution, detected exclusively in adult brain in inhibitory interneurons.

The protein resides in the nucleus. Its function is as follows. May play a broad role in neurogenesis. May control regulatory pathways relevant to schizophrenia and to psychotic illness. The polypeptide is Neuronal PAS domain-containing protein 3 (Npas3) (Mus musculus (Mouse)).